A 464-amino-acid polypeptide reads, in one-letter code: Rab GDP-dissociation inhibitor (464 aa).

The protein belongs to the Rab GDI family. As to quaternary structure, interacts with the GDP-bound form of Rab GTPase YPT7.

Functionally, regulates the GDP/GTP exchange reaction of YPT7 by inhibiting the dissociation of GDP from it, and the subsequent binding of GTP to YTP7. In Pyricularia oryzae (strain 70-15 / ATCC MYA-4617 / FGSC 8958) (Rice blast fungus), this protein is Rab GDP-dissociation inhibitor (GDI1).